Consider the following 315-residue polypeptide: Lipoyl synthase (315 aa).

[4Fe-4S] cluster contacts are provided by cysteine 62, cysteine 67, cysteine 73, cysteine 88, cysteine 92, cysteine 95, and serine 302. One can recognise a Radical SAM core domain in the interval 74-292 (FNHGTATFMI…KIALKLGFIR (219 aa)).

It belongs to the radical SAM superfamily. Lipoyl synthase family. The cofactor is [4Fe-4S] cluster.

The protein resides in the cytoplasm. It carries out the reaction [[Fe-S] cluster scaffold protein carrying a second [4Fe-4S](2+) cluster] + N(6)-octanoyl-L-lysyl-[protein] + 2 oxidized [2Fe-2S]-[ferredoxin] + 2 S-adenosyl-L-methionine + 4 H(+) = [[Fe-S] cluster scaffold protein] + N(6)-[(R)-dihydrolipoyl]-L-lysyl-[protein] + 4 Fe(3+) + 2 hydrogen sulfide + 2 5'-deoxyadenosine + 2 L-methionine + 2 reduced [2Fe-2S]-[ferredoxin]. Its pathway is protein modification; protein lipoylation via endogenous pathway; protein N(6)-(lipoyl)lysine from octanoyl-[acyl-carrier-protein]: step 2/2. Catalyzes the radical-mediated insertion of two sulfur atoms into the C-6 and C-8 positions of the octanoyl moiety bound to the lipoyl domains of lipoate-dependent enzymes, thereby converting the octanoylated domains into lipoylated derivatives. The polypeptide is Lipoyl synthase (Vesicomyosocius okutanii subsp. Calyptogena okutanii (strain HA)).